The following is a 257-amino-acid chain: Protein THYLAKOID ASSEMBLY 8-like, chloroplastic (257 aa).

The N-terminal 55 residues, Met-1–Ser-55, are a transit peptide targeting the chloroplast. 2 PPR repeats span residues Asp-142–Pro-176 and Asp-177–Pro-211.

It belongs to the PPR family. P subfamily.

The protein resides in the plastid. It localises to the chloroplast. Its function is as follows. Binds weakly to specific single strand RNA (ssRNA). The sequence is that of Protein THYLAKOID ASSEMBLY 8-like, chloroplastic from Arabidopsis thaliana (Mouse-ear cress).